Reading from the N-terminus, the 1073-residue chain is Carbamoyl phosphate synthase large chain (1073 aa).

The carboxyphosphate synthetic domain stretch occupies residues 2–403 (PKRTDIKSIL…SLQKALRGLE (402 aa)). Residues R129, R169, G175, G176, E208, L210, E215, G241, I242, H243, Q285, and E299 each coordinate ATP. The ATP-grasp 1 domain occupies 133–328 (DVAMKKIGLE…IAKVAAKLAV (196 aa)). Residues Q285, E299, and N301 each contribute to the Mg(2+) site. Residues Q285, E299, and N301 each coordinate Mn(2+). The tract at residues 404-553 (VGATGFDPKV…YSTYEEECEA (150 aa)) is oligomerization domain. The segment at 554–936 (NPSTDREKIM…AFAKAQLGSN (383 aa)) is carbamoyl phosphate synthetic domain. The 192-residue stretch at 679 to 870 (QHAVDRLKLK…LAKVAARVMA (192 aa)) folds into the ATP-grasp 2 domain. Residues R715, H754, L756, E761, G786, V787, H788, S789, Q829, and E841 each contribute to the ATP site. 3 residues coordinate Mg(2+): Q829, E841, and N843. 3 residues coordinate Mn(2+): Q829, E841, and N843. Residues 937 to 1073 (STMKKHGRAL…SVQEMHAQIK (137 aa)) enclose the MGS-like domain. The interval 937 to 1073 (STMKKHGRAL…SVQEMHAQIK (137 aa)) is allosteric domain.

The protein belongs to the CarB family. As to quaternary structure, composed of two chains; the small (or glutamine) chain promotes the hydrolysis of glutamine to ammonia, which is used by the large (or ammonia) chain to synthesize carbamoyl phosphate. Tetramer of heterodimers (alpha,beta)4. The cofactor is Mg(2+). Mn(2+) serves as cofactor.

The enzyme catalyses hydrogencarbonate + L-glutamine + 2 ATP + H2O = carbamoyl phosphate + L-glutamate + 2 ADP + phosphate + 2 H(+). It carries out the reaction hydrogencarbonate + NH4(+) + 2 ATP = carbamoyl phosphate + 2 ADP + phosphate + 2 H(+). It participates in amino-acid biosynthesis; L-arginine biosynthesis; carbamoyl phosphate from bicarbonate: step 1/1. The protein operates within pyrimidine metabolism; UMP biosynthesis via de novo pathway; (S)-dihydroorotate from bicarbonate: step 1/3. Functionally, large subunit of the glutamine-dependent carbamoyl phosphate synthetase (CPSase). CPSase catalyzes the formation of carbamoyl phosphate from the ammonia moiety of glutamine, carbonate, and phosphate donated by ATP, constituting the first step of 2 biosynthetic pathways, one leading to arginine and/or urea and the other to pyrimidine nucleotides. The large subunit (synthetase) binds the substrates ammonia (free or transferred from glutamine from the small subunit), hydrogencarbonate and ATP and carries out an ATP-coupled ligase reaction, activating hydrogencarbonate by forming carboxy phosphate which reacts with ammonia to form carbamoyl phosphate. In Escherichia coli O157:H7, this protein is Carbamoyl phosphate synthase large chain.